A 59-amino-acid chain; its full sequence is UPF0509 protein KPK_3153 (59 aa).

This sequence belongs to the UPF0509 family.

This is UPF0509 protein KPK_3153 from Klebsiella pneumoniae (strain 342).